The chain runs to 260 residues: Exosome complex component Rrp4 (260 aa).

The S1 motif domain maps to 59–128 (NDVVIGIVIV…NSMKVELALR (70 aa)). The 59-residue stretch at 136–194 (KTGQIVEVEPVKVPRVIGHGGSMISMLKKETNCSIFVGQNGRIWIDGKDDDVELLSKAL) folds into the KH domain.

The protein belongs to the RRP4 family. As to quaternary structure, component of the archaeal exosome complex. Forms a trimer of Rrp4 and/or Csl4 subunits. The trimer associates with a hexameric ring-like arrangement composed of 3 Rrp41-Rrp42 heterodimers.

It localises to the cytoplasm. Its function is as follows. Non-catalytic component of the exosome, which is a complex involved in RNA degradation. Increases the RNA binding and the efficiency of RNA degradation. Confers strong poly(A) specificity to the exosome. This Methanosarcina barkeri (strain Fusaro / DSM 804) protein is Exosome complex component Rrp4.